The chain runs to 272 residues: Putative UTP--glucose-1-phosphate uridylyltransferase (272 aa).

This sequence belongs to the UDPGP type 2 family.

It carries out the reaction alpha-D-glucose 1-phosphate + UTP + H(+) = UDP-alpha-D-glucose + diphosphate. This chain is Putative UTP--glucose-1-phosphate uridylyltransferase (ytdA), found in Bacillus subtilis (strain 168).